Reading from the N-terminus, the 428-residue chain is Dihydroorotase (428 aa).

Zn(2+) contacts are provided by histidine 61 and histidine 63. Substrate-binding positions include 63–65 (HLR) and asparagine 95. Aspartate 153, histidine 180, and histidine 233 together coordinate Zn(2+). A substrate-binding site is contributed by asparagine 279. Aspartate 306 provides a ligand contact to Zn(2+). The active site involves aspartate 306. Substrate contacts are provided by residues histidine 310 and 324–325 (FG).

This sequence belongs to the metallo-dependent hydrolases superfamily. DHOase family. Class I DHOase subfamily. The cofactor is Zn(2+).

The catalysed reaction is (S)-dihydroorotate + H2O = N-carbamoyl-L-aspartate + H(+). It functions in the pathway pyrimidine metabolism; UMP biosynthesis via de novo pathway; (S)-dihydroorotate from bicarbonate: step 3/3. Its function is as follows. Catalyzes the reversible cyclization of carbamoyl aspartate to dihydroorotate. This Geobacillus thermodenitrificans (strain NG80-2) protein is Dihydroorotase.